Here is a 479-residue protein sequence, read N- to C-terminus: Probable aspartic-type endopeptidase OPSB (479 aa).

The N-terminal stretch at 1-19 (MRGDSFIWSLTTAASLLYA) is a signal peptide. A Peptidase A1 domain is found at 58-393 (SGKTVSQDLD…DLDNNEISIA (336 aa)). Residue Asn-68 is glycosylated (N-linked (GlcNAc...) asparagine). Asp-76 is an active-site residue. N-linked (GlcNAc...) asparagine glycosylation is present at Asn-121. Residue Asp-275 is part of the active site. Asn-398 carries an N-linked (GlcNAc...) asparagine glycan. The interval 435 to 454 (LSGIETGVPGARPTSRGAAP) is disordered. A lipid anchor (GPI-anchor amidated glycine) is attached at Gly-451. Positions 452 to 479 (AAPTMRPDVTFGVAAAGLAGAGILFAFM) are cleaved as a propeptide — removed in mature form.

It belongs to the peptidase A1 family.

It localises to the cell membrane. Probable GPI-anchored aspartic-type endopeptidase which contributes to virulence. In Arthroderma otae (strain ATCC MYA-4605 / CBS 113480) (Microsporum canis), this protein is Probable aspartic-type endopeptidase OPSB (OPSB).